We begin with the raw amino-acid sequence, 176 residues long: Phosphopantetheine adenylyltransferase (176 aa).

Substrate is bound at residue threonine 11. ATP is bound by residues 11–12 (TF) and histidine 19. Substrate-binding residues include lysine 43, leucine 93, and arginine 107. ATP-binding positions include glutamate 117 and 141–147 (LSVVSSS).

The protein belongs to the bacterial CoaD family. As to quaternary structure, homohexamer. It depends on Mg(2+) as a cofactor.

Its subcellular location is the cytoplasm. The catalysed reaction is (R)-4'-phosphopantetheine + ATP + H(+) = 3'-dephospho-CoA + diphosphate. The protein operates within cofactor biosynthesis; coenzyme A biosynthesis; CoA from (R)-pantothenate: step 4/5. Reversibly transfers an adenylyl group from ATP to 4'-phosphopantetheine, yielding dephospho-CoA (dPCoA) and pyrophosphate. The chain is Phosphopantetheine adenylyltransferase from Tropheryma whipplei (strain TW08/27) (Whipple's bacillus).